A 424-amino-acid polypeptide reads, in one-letter code: MLDIKFVRANPEKLKEALDKRGYQIDFEEFLSLERERLLLLREIEQKRAIRNSVSQEIAHLKKLKSDNETIDKLIAEMRKLGEELGSIEQKLREIEDKVQNFLLFLPNIPHDSVPLGKDENENVEIRRWGEPSHFDFEPMNHWDIGEILGIIDFERASKIAGSRFAIMKGMGARLERALINFMLDLHTQKGYIEVLPPILVNKVSMTGTGQLPKFEEDLFKIVDPEFYLIPTAEVPVTNIHREEILSEDELPIYYVSYTPCFRKEAGSHGKDVRGLIRQHQFNKVELVKFVKPEDSYEELESLTRDAEEVLKMLGLPYRVVALCTGDLGFASAKTYDIEVWLPGQGRYREISSCSNFEDFQARRANIRFRRRDKKGTEFVHTLNGSGLAIGRTLVAILENYQQKDGSVIVPEVLRPYMGIDVIR.

Residue 232 to 234 (TAE) coordinates L-serine. An ATP-binding site is contributed by 263 to 265 (RKE). Glu-286 contributes to the L-serine binding site. 350–353 (EISS) provides a ligand contact to ATP. Ser-386 lines the L-serine pocket.

This sequence belongs to the class-II aminoacyl-tRNA synthetase family. Type-1 seryl-tRNA synthetase subfamily. As to quaternary structure, homodimer. The tRNA molecule binds across the dimer.

The protein resides in the cytoplasm. It catalyses the reaction tRNA(Ser) + L-serine + ATP = L-seryl-tRNA(Ser) + AMP + diphosphate + H(+). The enzyme catalyses tRNA(Sec) + L-serine + ATP = L-seryl-tRNA(Sec) + AMP + diphosphate + H(+). Its pathway is aminoacyl-tRNA biosynthesis; selenocysteinyl-tRNA(Sec) biosynthesis; L-seryl-tRNA(Sec) from L-serine and tRNA(Sec): step 1/1. In terms of biological role, catalyzes the attachment of serine to tRNA(Ser). Is also able to aminoacylate tRNA(Sec) with serine, to form the misacylated tRNA L-seryl-tRNA(Sec), which will be further converted into selenocysteinyl-tRNA(Sec). The protein is Serine--tRNA ligase of Thermodesulfovibrio yellowstonii (strain ATCC 51303 / DSM 11347 / YP87).